The sequence spans 241 residues: 1-(5-phosphoribosyl)-5-[(5-phosphoribosylamino)methylideneamino] imidazole-4-carboxamide isomerase (241 aa).

The active-site Proton acceptor is Asp-10. Asp-131 serves as the catalytic Proton donor.

Belongs to the HisA/HisF family.

The protein localises to the cytoplasm. The enzyme catalyses 1-(5-phospho-beta-D-ribosyl)-5-[(5-phospho-beta-D-ribosylamino)methylideneamino]imidazole-4-carboxamide = 5-[(5-phospho-1-deoxy-D-ribulos-1-ylimino)methylamino]-1-(5-phospho-beta-D-ribosyl)imidazole-4-carboxamide. It participates in amino-acid biosynthesis; L-histidine biosynthesis; L-histidine from 5-phospho-alpha-D-ribose 1-diphosphate: step 4/9. This is 1-(5-phosphoribosyl)-5-[(5-phosphoribosylamino)methylideneamino] imidazole-4-carboxamide isomerase from Hyphomonas neptunium (strain ATCC 15444).